The chain runs to 876 residues: Leucine--tRNA ligase (876 aa).

Positions 42–52 (PYPSGKLHMGH) match the 'HIGH' region motif. Residues 634 to 638 (KMSKS) carry the 'KMSKS' region motif. K637 serves as a coordination point for ATP.

Belongs to the class-I aminoacyl-tRNA synthetase family.

It is found in the cytoplasm. The catalysed reaction is tRNA(Leu) + L-leucine + ATP = L-leucyl-tRNA(Leu) + AMP + diphosphate. This Neisseria meningitidis serogroup C / serotype 2a (strain ATCC 700532 / DSM 15464 / FAM18) protein is Leucine--tRNA ligase.